A 385-amino-acid chain; its full sequence is Mannitol-1-phosphate 5-dehydrogenase (385 aa).

3–14 (ALQFGAGNIGRG) lines the NAD(+) pocket.

It belongs to the mannitol dehydrogenase family.

It catalyses the reaction D-mannitol 1-phosphate + NAD(+) = beta-D-fructose 6-phosphate + NADH + H(+). This is Mannitol-1-phosphate 5-dehydrogenase (mtlD) from Buchnera aphidicola subsp. Acyrthosiphon pisum (strain APS) (Acyrthosiphon pisum symbiotic bacterium).